Consider the following 651-residue polypeptide: Cysteine-rich receptor-like protein kinase 42 (651 aa).

The signal sequence occupies residues methionine 1 to serine 28. At serine 29–lysine 251 the chain is on the extracellular side. 2 consecutive Gnk2-homologous domains span residues threonine 35–phenylalanine 135 and aspartate 137–phenylalanine 236. Asparagine 79 and asparagine 151 each carry an N-linked (GlcNAc...) asparagine glycan. A helical membrane pass occupies residues glycine 252–threonine 272. The Cytoplasmic segment spans residues tyrosine 273–isoleucine 651. Residues phenylalanine 315–leucine 604 form the Protein kinase domain. ATP is bound by residues leucine 321–valine 329 and lysine 343. Phosphotyrosine is present on tyrosine 388. The Proton acceptor role is filled by aspartate 440. Residues serine 444 and serine 473 each carry the phosphoserine modification. Phosphothreonine is present on residues threonine 474 and threonine 479. The residue at position 487 (tyrosine 487) is a Phosphotyrosine.

It belongs to the protein kinase superfamily. Ser/Thr protein kinase family. CRK subfamily.

The protein resides in the membrane. The catalysed reaction is L-seryl-[protein] + ATP = O-phospho-L-seryl-[protein] + ADP + H(+). It catalyses the reaction L-threonyl-[protein] + ATP = O-phospho-L-threonyl-[protein] + ADP + H(+). This is Cysteine-rich receptor-like protein kinase 42 (CRK42) from Arabidopsis thaliana (Mouse-ear cress).